The sequence spans 74 residues: ATP synthase subunit c (74 aa).

The next 2 helical transmembrane spans lie at 5–25 and 49–69; these read LAYI…LGVG and LFIG…VALL.

This sequence belongs to the ATPase C chain family. As to quaternary structure, F-type ATPases have 2 components, F(1) - the catalytic core - and F(0) - the membrane proton channel. F(1) has five subunits: alpha(3), beta(3), gamma(1), delta(1), epsilon(1). F(0) has three main subunits: a(1), b(2) and c(10-14). The alpha and beta chains form an alternating ring which encloses part of the gamma chain. F(1) is attached to F(0) by a central stalk formed by the gamma and epsilon chains, while a peripheral stalk is formed by the delta and b chains.

The protein localises to the cell inner membrane. F(1)F(0) ATP synthase produces ATP from ADP in the presence of a proton or sodium gradient. F-type ATPases consist of two structural domains, F(1) containing the extramembraneous catalytic core and F(0) containing the membrane proton channel, linked together by a central stalk and a peripheral stalk. During catalysis, ATP synthesis in the catalytic domain of F(1) is coupled via a rotary mechanism of the central stalk subunits to proton translocation. Its function is as follows. Key component of the F(0) channel; it plays a direct role in translocation across the membrane. A homomeric c-ring of between 10-14 subunits forms the central stalk rotor element with the F(1) delta and epsilon subunits. This is ATP synthase subunit c from Ruegeria sp. (strain TM1040) (Silicibacter sp.).